The chain runs to 1481 residues: Coiled-coil domain-containing protein 88B (1481 aa).

Coiled-coil stretches lie at residues 200-225 (ELVAEELEMQLRSLTGMMSRLARERD) and 258-491 (SHHL…GSQH). 3 disordered regions span residues 430–458 (ELQRSLEPPPGSPGEASLPGAAPSLQDEV), 494–731 (LEEQ…AIPE), and 1331–1481 (PRRE…SLSQ). S441 is modified (phosphoserine). 2 stretches are compositionally biased toward polar residues: residues 542–557 (ASYSDITRSPKCSQAP) and 568–590 (QMVSQDPQTSDQALQESDPTVET). The residue at position 649 (S649) is a Phosphoserine. A compositionally biased stretch (basic and acidic residues) spans 660–695 (TLREPLKDQKALDRELELSKQQKETGRHEQRPKGLE). The stretch at 731–1308 (EEQALRDEVA…KIMDQYRVLE (578 aa)) forms a coiled coil. Phosphoserine occurs at positions 1353 and 1384. Polar residues predominate over residues 1371-1386 (TGSSSPAPMRRVQSSL). Residues 1453–1472 (LSEHEADDTREAFQEQKPEK) show a composition bias toward basic and acidic residues.

Belongs to the CCDC88 family. Homodimer. Interacts with DOCK8. Interacts (via C-terminus) with intact microtubules. Interacts with dynein-dynactin motor complex. Interacts (via C-terminus) with HSPA5. In terms of tissue distribution, abundantly expressed in immune cells, including both CD4(+) and CD8(+) T-cells and in myeloid cells (at protein level). Expressed in endothelium (at protein level). Expressed specifically in spleen, bone marrow, lymph nodes and thymus. Expressed in liver and heart.

It localises to the membrane. The protein localises to the cytoplasm. The protein resides in the cytoskeleton. It is found in the microtubule organizing center. Its subcellular location is the endoplasmic reticulum. It localises to the golgi apparatus. In terms of biological role, acts as a positive regulator of T-cell maturation and inflammatory function. Required for several functions of T-cells in both the CD4(+) and the CD8(+) compartments and this includes expression of cell surface markers of activation, proliferation, and cytokine production in response to specific or non-specific stimulation and during the course of infection with the mouse malaria parasite Plasmodium berghei. Enhances NK cell cytotoxicity by positively regulating polarization of microtubule-organizing center (MTOC) to cytotoxic synapse, lytic granule transport along microtubules, and dynein-mediated clustering to MTOC. Interacts with HSPA5 and stabilizes the interaction between HSPA5 and ERN1, leading to suppression of ERN1-induced JNK activation and endoplasmic reticulum stress-induced apoptosis. This Mus musculus (Mouse) protein is Coiled-coil domain-containing protein 88B (Ccdc88b).